The primary structure comprises 171 residues: Protein ups1 homolog (171 aa).

The interval 1-79 is required for mitochondrial targeting; the sequence is MTAICTDKTE…LNVNKSYILE (79 aa). In terms of domain architecture, PRELI/MSF1 spans 2–171; that stretch reads TAICTDKTEL…YVIQQKFQPS (170 aa).

It localises to the mitochondrion inner membrane. It is found in the mitochondrion intermembrane space. Its function is as follows. Required for maintenance of normal mitochondrial morphology as well as PCP1-dependent processing of MGM1. This chain is Protein ups1 homolog, found in Schizosaccharomyces pombe (strain 972 / ATCC 24843) (Fission yeast).